The following is a 356-amino-acid chain: Photosynthetic reaction center cytochrome c subunit (356 aa).

The signal sequence occupies residues 1–20 (MKQLIVNSVATVALASLVAG). The S-diacylglycerol cysteine moiety is linked to residue Cys-21. Met-94, Cys-107, Cys-110, His-111, Met-130, His-144, Cys-152, Cys-155, His-156, Met-253, Cys-264, Cys-267, His-268, Cys-325, Cys-328, and His-329 together coordinate heme.

Component of the photosynthetic reaction center composed of protein subunits L (PufL), M (PufM), H (PuhA) and cytochrome C (PufC). Post-translationally, binds 4 heme groups per subunit. In terms of processing, after the signal sequence is removed, the N-terminal cysteine is modified to form a diacylglyceride thioether, but the alpha-amino group is free and is not N-palmitoylated.

The protein resides in the cellular chromatophore membrane. Functionally, the reaction center of purple bacteria contains a tightly bound cytochrome molecule which re-reduces the photo oxidized primary electron donor. In Blastochloris viridis (Rhodopseudomonas viridis), this protein is Photosynthetic reaction center cytochrome c subunit.